A 263-amino-acid chain; its full sequence is Small ribosomal subunit protein eS4, Y isoform 2 (263 aa).

The S4 RNA-binding domain occupies 42 to 104; the sequence is LPLIVFLRNR…TGEHFRLVYN (63 aa).

The protein belongs to the eukaryotic ribosomal protein eS4 family.

In Homo sapiens (Human), this protein is Small ribosomal subunit protein eS4, Y isoform 2 (RPS4Y2).